A 118-amino-acid chain; its full sequence is NADPH-dependent 7-cyano-7-deazaguanine reductase (118 aa).

Residue cysteine 31 is the Thioimide intermediate of the active site. The active-site Proton donor is the aspartate 38. Substrate contacts are provided by residues 53 to 55 (IEL) and 72 to 73 (YE).

The protein belongs to the GTP cyclohydrolase I family. QueF type 1 subfamily.

It localises to the cytoplasm. The enzyme catalyses 7-aminomethyl-7-carbaguanine + 2 NADP(+) = 7-cyano-7-deazaguanine + 2 NADPH + 3 H(+). The protein operates within tRNA modification; tRNA-queuosine biosynthesis. Catalyzes the NADPH-dependent reduction of 7-cyano-7-deazaguanine (preQ0) to 7-aminomethyl-7-deazaguanine (preQ1). The polypeptide is NADPH-dependent 7-cyano-7-deazaguanine reductase (Prosthecochloris aestuarii (strain DSM 271 / SK 413)).